The following is a 462-amino-acid chain: Sonic hedgehog protein (462 aa).

Residues 1-23 form the signal peptide; the sequence is MLLLARCLLLVLVSSLLVCSGLA. The N-palmitoyl cysteine moiety is linked to residue Cys-24. The Cardin-Weintraub signature appears at 32–38; the sequence is KRRHPKK. Residues Glu-89, Glu-90, Asp-95, Thr-125, Glu-126, Asp-129, and Asp-131 each contribute to the Ca(2+) site. Zn(2+) contacts are provided by His-140, Asp-147, and His-182. The Cholesterol glycine ester moiety is linked to residue Gly-197. N-linked (GlcNAc...) asparagine glycosylation occurs at Asn-278. 2 disordered regions span residues 279–302 and 395–414; these read DSAT…LGPR and TDRG…GRVA. Residues 283–292 show a composition bias toward low complexity; the sequence is GEPEASSGSG. Gly residues predominate over residues 400 to 412; the sequence is DSGGGDRGGGGGR.

The protein belongs to the hedgehog family. As to quaternary structure, multimer. In terms of assembly, interacts with HHATL/GUP1 which negatively regulates HHAT-mediated palmitoylation of the SHH N-terminus. Interacts with BOC and CDON. Interacts with HHIP. Interacts with DISP1 via its cholesterol anchor. Interacts with SCUBE2. Interacts with glypican GPC3. In terms of processing, the C-terminal domain displays an autoproteolysis activity and a cholesterol transferase activity. Both activities result in the cleavage of the full-length protein and covalent attachment of a cholesterol moiety to the C-terminal of the newly generated N-terminal fragment (ShhN). Cholesterylation is required for the sonic hedgehog protein N-product targeting to lipid rafts and multimerization. ShhN is the active species in both local and long-range signaling, whereas the C-product (ShhC) is degraded in the endoplasmic reticulum. Post-translationally, N-palmitoylation by HHAT of ShhN is required for sonic hedgehog protein N-product multimerization and full activity. It is a prerequisite for the membrane-proximal positioning and the subsequent shedding of this N-terminal peptide. The lipidated N- and C-terminal peptides of ShhNp can be cleaved (shedding). The N-terminal palmitoylated peptide is cleaved at the Cardin-Weintraub (CW) motif site. The cleavage reduced the interactions with heparan sulfate. The cleavage is enhanced by SCUBE2.

Its subcellular location is the endoplasmic reticulum membrane. It is found in the golgi apparatus membrane. The protein localises to the secreted. The protein resides in the cell membrane. The catalysed reaction is glycyl-L-cysteinyl-[protein] + cholesterol + H(+) = [protein]-C-terminal glycyl cholesterol ester + N-terminal L-cysteinyl-[protein]. The C-terminal part of the sonic hedgehog protein precursor displays an autoproteolysis and a cholesterol transferase activity. Both activities result in the cleavage of the full-length protein into two parts (ShhN and ShhC) followed by the covalent attachment of a cholesterol moiety to the C-terminal of the newly generated ShhN. Both activities occur in the endoplasmic reticulum. Once cleaved, ShhC is degraded in the endoplasmic reticulum. Functionally, the dually lipidated sonic hedgehog protein N-product (ShhNp) is a morphogen which is essential for a variety of patterning events during development. Induces ventral cell fate in the neural tube and somites. Involved in the patterning of the anterior-posterior axis of the developing limb bud. Essential for axon guidance. Binds to the patched (PTCH1) receptor, which functions in association with smoothened (SMO), to activate the transcription of target genes. In the absence of SHH, PTCH1 represses the constitutive signaling activity of SMO. In Homo sapiens (Human), this protein is Sonic hedgehog protein.